Here is a 76-residue protein sequence, read N- to C-terminus: MAMKKFVKKRKKVNFFAKNKINYIDYKDVELLKKFISGNGQILPRRITGTSPKHQRQLAVAIKRARQMALLPYVID.

The protein belongs to the bacterial ribosomal protein bS18 family. In terms of assembly, part of the 30S ribosomal subunit. Forms a tight heterodimer with protein bS6.

Its function is as follows. Binds as a heterodimer with protein bS6 to the central domain of the 16S rRNA, where it helps stabilize the platform of the 30S subunit. In Mesoplasma florum (strain ATCC 33453 / NBRC 100688 / NCTC 11704 / L1) (Acholeplasma florum), this protein is Small ribosomal subunit protein bS18.